The following is a 1005-amino-acid chain: DNA double-strand break repair Rad50 ATPase (1005 aa).

ATP contacts are provided by residues Lys-14, 35 to 40, 62 to 64, and Gln-134; these read GSGKSS and ITK. Coiled-coil stretches lie at residues 189-230, 292-321, 346-379, and 404-498; these read KENY…IEKL, LVDEIRKIESRLRELKSHYEDYLKLTKQLE, LDTLLNKIKDEIERVETIKDLLEELKNLNEEIEK, and AVEY…LKEV. The Zinc-hook domain maps to 457-554; it reads IEEKKKVLEN…DIEKLKKEID (98 aa). Cys-502 and Cys-505 together coordinate Zn(2+). Coiled coils occupy residues 523 to 600, 656 to 692, and 800 to 834; these read TQLN…YVIN, KEKCREELNKLREDEREINRLKDKLNELKNKEKELIE, and RQELDNVREQKTEIETGIEYLKKDVESLKARLKEM.

Belongs to the SMC family. RAD50 subfamily. Homodimer. Forms a heterotetramer composed of two Mre11 subunits and two Rad50 subunits. Zn(2+) serves as cofactor.

Its function is as follows. Part of the Rad50/Mre11 complex, which is involved in the early steps of DNA double-strand break (DSB) repair. The complex may facilitate opening of the processed DNA ends to aid in the recruitment of HerA and NurA. Rad50 controls the balance between DNA end bridging and DNA resection via ATP-dependent structural rearrangements of the Rad50/Mre11 complex. The chain is DNA double-strand break repair Rad50 ATPase from Methanocaldococcus jannaschii (strain ATCC 43067 / DSM 2661 / JAL-1 / JCM 10045 / NBRC 100440) (Methanococcus jannaschii).